The primary structure comprises 247 residues: Probable transcriptional regulatory protein lpg1286 (247 aa).

This sequence belongs to the TACO1 family.

It is found in the cytoplasm. In Legionella pneumophila subsp. pneumophila (strain Philadelphia 1 / ATCC 33152 / DSM 7513), this protein is Probable transcriptional regulatory protein lpg1286.